We begin with the raw amino-acid sequence, 907 residues long: Protein translocase subunit SecA (907 aa).

ATP contacts are provided by residues glutamine 87, 105–109, and aspartate 506; that span reads GEGKT. Residues 834–850 show a composition bias toward basic and acidic residues; the sequence is LEQQREEEAREQAEKMK. Positions 834–907 are disordered; that stretch reads LEQQREEEAR…KYKQCHGKIE (74 aa). Residues 864 to 875 are compositionally biased toward low complexity; that stretch reads QPQPSQQQGEQP. Zn(2+) is bound by residues cysteine 891, cysteine 893, cysteine 902, and histidine 903. Residues 897–907 show a composition bias toward basic residues; that stretch reads KKYKQCHGKIE.

This sequence belongs to the SecA family. Monomer and homodimer. Part of the essential Sec protein translocation apparatus which comprises SecA, SecYEG and auxiliary proteins SecDF-YajC and YidC. Zn(2+) serves as cofactor.

It localises to the cell inner membrane. The protein localises to the cytoplasm. The catalysed reaction is ATP + H2O + cellular proteinSide 1 = ADP + phosphate + cellular proteinSide 2.. In terms of biological role, part of the Sec protein translocase complex. Interacts with the SecYEG preprotein conducting channel. Has a central role in coupling the hydrolysis of ATP to the transfer of proteins into and across the cell membrane, serving both as a receptor for the preprotein-SecB complex and as an ATP-driven molecular motor driving the stepwise translocation of polypeptide chains across the membrane. In Alcanivorax borkumensis (strain ATCC 700651 / DSM 11573 / NCIMB 13689 / SK2), this protein is Protein translocase subunit SecA.